We begin with the raw amino-acid sequence, 334 residues long: Ornithine carbamoyltransferase (334 aa).

Residues 57-60 (STRT), glutamine 84, arginine 108, and 135-138 (HPTQ) contribute to the carbamoyl phosphate site. L-ornithine is bound by residues asparagine 169, aspartate 233, and 237-238 (SM). Residues 275 to 276 (CL) and arginine 320 each bind carbamoyl phosphate.

The protein belongs to the aspartate/ornithine carbamoyltransferase superfamily. OTCase family.

Its subcellular location is the cytoplasm. The enzyme catalyses carbamoyl phosphate + L-ornithine = L-citrulline + phosphate + H(+). It participates in amino-acid biosynthesis; L-arginine biosynthesis; L-arginine from L-ornithine and carbamoyl phosphate: step 1/3. Reversibly catalyzes the transfer of the carbamoyl group from carbamoyl phosphate (CP) to the N(epsilon) atom of ornithine (ORN) to produce L-citrulline. The polypeptide is Ornithine carbamoyltransferase (Vibrio campbellii (strain ATCC BAA-1116)).